A 913-amino-acid chain; its full sequence is Tyrosine-protein phosphatase non-receptor type 3 (913 aa).

In terms of domain architecture, FERM spans 29–312 (VICSIRFLDG…EHHSFFQAKK (284 aa)). A phosphoserine mark is found at Ser-357, Ser-359, and Ser-367. Disordered regions lie at residues 364 to 400 (ETKS…DNLA) and 417 to 473 (KGPL…PDGV). A Phosphothreonine modification is found at Thr-376. At Ser-381 the chain carries Phosphoserine. The span at 382–393 (PRLRHEIRKPRH) shows a compositional bias: basic residues. Ser-425 carries the phosphoserine modification. Positions 441–453 (SENNPAQSCLTQK) are enriched in polar residues. Over residues 454-470 (SSSSVSPSSNAPGSCSP) the composition is skewed to low complexity. One can recognise a PDZ domain in the interval 510–582 (LIRITPDEEG…DQVVMFIKAS (73 aa)). Residues 646–901 (VLIQFEQLYR…KFVCEAILRV (256 aa)) form the Tyrosine-protein phosphatase domain. Substrate contacts are provided by residues Asp-811, 842-848 (CSAGIGR), and Gln-886. Residue Cys-842 is the Phosphocysteine intermediate of the active site.

It belongs to the protein-tyrosine phosphatase family. Non-receptor class subfamily.

The protein localises to the cell membrane. The protein resides in the cytoplasm. It is found in the cytoskeleton. It carries out the reaction O-phospho-L-tyrosyl-[protein] + H2O = L-tyrosyl-[protein] + phosphate. Its function is as follows. May act at junctions between the membrane and the cytoskeleton. The sequence is that of Tyrosine-protein phosphatase non-receptor type 3 (Ptpn3) from Mus musculus (Mouse).